A 344-amino-acid chain; its full sequence is L-rhamnose-proton symporter (344 aa).

A run of 10 helical transmembrane segments spans residues 4–24, 38–58, 68–88, 101–121, 137–157, 175–195, 214–234, 259–279, 290–310, and 323–343; these read AITM…CFYA, WSIG…ALLL, FNLS…IGNI, MGIG…TPII, TLLG…AGQL, LLLA…MNAA, LPSY…FCFV, ILLS…YAWG, ISWM…GLVL, and VLSL…MGMA.

This sequence belongs to the L-rhamnose transporter (TC 2.A.7.6) family.

Its subcellular location is the cell inner membrane. It carries out the reaction L-rhamnopyranose(in) + H(+)(in) = L-rhamnopyranose(out) + H(+)(out). Its function is as follows. Uptake of L-rhamnose across the cytoplasmic membrane with the concomitant transport of protons into the cell (symport system). The chain is L-rhamnose-proton symporter from Citrobacter koseri (strain ATCC BAA-895 / CDC 4225-83 / SGSC4696).